Consider the following 411-residue polypeptide: Serine--tRNA ligase (411 aa).

226–228 lines the L-serine pocket; that stretch reads TSE. An ATP-binding site is contributed by 257–259; that stretch reads RKE. Glutamate 280 serves as a coordination point for L-serine. 344–347 contributes to the ATP binding site; sequence EISS. Position 379 (serine 379) interacts with L-serine.

Belongs to the class-II aminoacyl-tRNA synthetase family. Type-1 seryl-tRNA synthetase subfamily. As to quaternary structure, homodimer. The tRNA molecule binds across the dimer.

It is found in the cytoplasm. The catalysed reaction is tRNA(Ser) + L-serine + ATP = L-seryl-tRNA(Ser) + AMP + diphosphate + H(+). The enzyme catalyses tRNA(Sec) + L-serine + ATP = L-seryl-tRNA(Sec) + AMP + diphosphate + H(+). The protein operates within aminoacyl-tRNA biosynthesis; selenocysteinyl-tRNA(Sec) biosynthesis; L-seryl-tRNA(Sec) from L-serine and tRNA(Sec): step 1/1. Catalyzes the attachment of serine to tRNA(Ser). Is also able to aminoacylate tRNA(Sec) with serine, to form the misacylated tRNA L-seryl-tRNA(Sec), which will be further converted into selenocysteinyl-tRNA(Sec). In Campylobacter jejuni (strain RM1221), this protein is Serine--tRNA ligase.